Reading from the N-terminus, the 55-residue chain is Lantibiotic epilancin 15X (55 aa).

The propeptide at 1-24 is cleaved by ElxP; that stretch reads MKKELFDLNLNKDIEAQKSDLNPQ. Serine 25 is modified (D-lactate; by the dehydratase ElxB and the dehydrogenase ElxO). Serine 27 is modified (2,3-didehydroalanine (Ser); by the dehydratase ElxB). Threonine 31 and threonine 32 each carry 2,3-didehydrobutyrine; by the dehydratase ElxB. The lanthionine (Ser-Cys); by the dehydratase ElxB and the cyclase ElxC cross-link spans 36-40; sequence SKKLC. 2 cross-links (beta-methyllanthionine (Thr-Cys); by the dehydratase ElxB and the cyclase ElxC) span residues 44 to 47 and 46 to 49; these read TLTC and TCGC. At threonine 52 the chain carries 2,3-didehydrobutyrine; by the dehydratase ElxB.

Maturation of this lantibiotic involves the enzymatic conversion of Thr, and Ser into dehydrated AA by ElxB and the formation of thioether bonds with cysteine by the cyclase ElxC. The next steps are cleavage of the leader peptide by ElxP and membrane translocation by ElxT. The leader peptide may be removed before membrane translocation, in contrast to other lantibiotics for which the cleavage occur after translocation. This is suggested by the probable cytoplasmic localization of the serine protease ElxP that cleaves the leader peptide. In terms of processing, the N-terminal D-lactate is probably produced by dehydration of Ser-25 by ElxB, followed by proteolytic removal of the leader peptide by the serine protease ElxP and hydrolysis of the resulting new N-terminal dehydroalanine. This hydrolysis may occur spontaneously. The pyruvate group thus formed is reduced to D-lactate by the NADPH-dependent oxidoreductase ElxO. This N-terminal D-lactate protects the lantibiotic against degradation against aminopeptidase. Post-translationally, it is not established whether the 2,3-didehydrobutyrines are the E- or Z-isomers.

Lanthionine-containing peptide antibiotic (lantibiotic) active on Gram-positive bacteria such as staphylococci, enterococci and streptococci. The bactericidal activity of lantibiotics is based on depolarization of energized bacterial cytoplasmic membranes, initiated by the formation of aqueous transmembrane pores. This chain is Lantibiotic epilancin 15X, found in Staphylococcus epidermidis.